The following is a 115-amino-acid chain: NADH-ubiquinone oxidoreductase chain 3 (115 aa).

3 helical membrane passes run leucine 3–tryptophan 23, phenylalanine 55–leucine 75, and threonine 86–tryptophan 106.

This sequence belongs to the complex I subunit 3 family. In terms of assembly, core subunit of respiratory chain NADH dehydrogenase (Complex I) which is composed of 45 different subunits. Interacts with TMEM186. Interacts with TMEM242.

The protein resides in the mitochondrion inner membrane. It catalyses the reaction a ubiquinone + NADH + 5 H(+)(in) = a ubiquinol + NAD(+) + 4 H(+)(out). Functionally, core subunit of the mitochondrial membrane respiratory chain NADH dehydrogenase (Complex I) which catalyzes electron transfer from NADH through the respiratory chain, using ubiquinone as an electron acceptor. Essential for the catalytic activity of complex I. The sequence is that of NADH-ubiquinone oxidoreductase chain 3 from Rhinoceros unicornis (Greater Indian rhinoceros).